The following is a 362-amino-acid chain: NAD(P)H-quinone oxidoreductase subunit 1, chloroplastic (362 aa).

8 consecutive transmembrane segments (helical) span residues 27–47, 103–123, 128–148, 164–184, 202–222, 247–267, 303–323, and 342–362; these read IWIL…LVIV, IAVI…HFVL, IGVF…LMAG, AAQS…ISLL, FFGW…ISSL, YSGI…LVSS, VIGI…SITI, and FLLP…LVSL.

It belongs to the complex I subunit 1 family. NDH is composed of at least 16 different subunits, 5 of which are encoded in the nucleus.

Its subcellular location is the plastid. It localises to the chloroplast thylakoid membrane. The enzyme catalyses a plastoquinone + NADH + (n+1) H(+)(in) = a plastoquinol + NAD(+) + n H(+)(out). It catalyses the reaction a plastoquinone + NADPH + (n+1) H(+)(in) = a plastoquinol + NADP(+) + n H(+)(out). Functionally, NDH shuttles electrons from NAD(P)H:plastoquinone, via FMN and iron-sulfur (Fe-S) centers, to quinones in the photosynthetic chain and possibly in a chloroplast respiratory chain. The immediate electron acceptor for the enzyme in this species is believed to be plastoquinone. Couples the redox reaction to proton translocation, and thus conserves the redox energy in a proton gradient. The protein is NAD(P)H-quinone oxidoreductase subunit 1, chloroplastic of Saccharum hybrid (Sugarcane).